The following is a 411-amino-acid chain: Multidrug resistance protein MdtG (411 aa).

Transmembrane regions (helical) follow at residues 17–37 (LFVA…VMPF), 59–79 (LVFS…GGLA), 92–112 (ALGM…WQFL), 116–136 (AVLG…ATQV), 147–167 (WLST…GLLA), 174–194 (PVFF…LFAV), 222–242 (VLTL…IAPI), 257–277 (LAFV…ISAP), 291–311 (ILVA…MVQN), 320–340 (FLLG…LIYN), and 379–399 (AVFV…WITL).

Belongs to the major facilitator superfamily. DHA1 family. MdtG (TC 2.A.1.2.20) subfamily.

The protein resides in the cell inner membrane. The protein is Multidrug resistance protein MdtG of Erwinia billingiae (strain Eb661).